We begin with the raw amino-acid sequence, 166 residues long: MDKGSTKVKLLSLENEIIEVDEEVAKKSQLIKNMIEDTGTEDDIPIPNVKKEILLKILEYCEKHKNDNPPEIEKPLTTSNLSELVDPYDAKFIDIENLEQLFEIILAANYLDIKSLLDLACAKVATLIKNKTPDEIRKTFNIPNDFTPEEEAQIREENKWAEEATS.

Residues 105-166 (ILAANYLDIK…ENKWAEEATS (62 aa)) form an interaction with the F-box domain of F-box proteins region.

It belongs to the SKP1 family. In terms of assembly, component of multiple SCF (SKP1-CUL1-F-box) E3 ubiquitin-protein ligase complexes formed of CUL1, SKP1, RBX1 and a variable F-box domain-containing protein as substrate-specific subunit.

The protein operates within protein modification; protein ubiquitination. In terms of biological role, essential component of the SCF (SKP1-CUL1-F-box protein) ubiquitin ligase complex, which mediates the ubiquitination of proteins involved in cell cycle progression, signal transduction and transcription. In the SCF complex, serves as an adapter that links the F-box protein to CUL1. The functional specificity of the SCF complex depends on the F-box protein as substrate recognition component. Its association with the holoenzyme telomerase ribonucleoprotein complex suggests that it may play a role in turnover of holoenzyme telomerase complex components. The sequence is that of S-phase kinase-associated protein 1 homolog from Tetrahymena thermophila (strain SB210).